Here is a 443-residue protein sequence, read N- to C-terminus: ATP-dependent protease ATPase subunit HslU (443 aa).

ATP contacts are provided by residues Ile19, 61-66 (GVGKTE), Asp256, Glu321, and Arg393.

This sequence belongs to the ClpX chaperone family. HslU subfamily. As to quaternary structure, a double ring-shaped homohexamer of HslV is capped on each side by a ring-shaped HslU homohexamer. The assembly of the HslU/HslV complex is dependent on binding of ATP.

The protein resides in the cytoplasm. Functionally, ATPase subunit of a proteasome-like degradation complex; this subunit has chaperone activity. The binding of ATP and its subsequent hydrolysis by HslU are essential for unfolding of protein substrates subsequently hydrolyzed by HslV. HslU recognizes the N-terminal part of its protein substrates and unfolds these before they are guided to HslV for hydrolysis. This chain is ATP-dependent protease ATPase subunit HslU, found in Ralstonia nicotianae (strain ATCC BAA-1114 / GMI1000) (Ralstonia solanacearum).